Reading from the N-terminus, the 118-residue chain is DNA-binding protein M164_1799 (118 aa).

The protein belongs to the PDCD5 family.

This is DNA-binding protein M164_1799 from Saccharolobus islandicus (strain M.16.4 / Kamchatka #3) (Sulfolobus islandicus).